Reading from the N-terminus, the 172-residue chain is Podoplanin (172 aa).

The N-terminal stretch at 1 to 22 (MWTVPVLFWVLGSVWFWDSAQG) is a signal peptide. Residues 23–141 (GTIGVNEDDI…KKDGLPVVTL (119 aa)) lie on the Extracellular side of the membrane. Threonine 37, threonine 51, threonine 52, threonine 53, and threonine 56 each carry an O-linked (GalNAc...) threonine glycan. The tract at residues 49–132 (KITTTGATGG…AGDETQTTDK (84 aa)) is disordered. Residues 51–63 (TTTGATGGLNEST) show a composition bias toward polar residues. A glycan (N-linked (GlcNAc...) asparagine) is linked at asparagine 60. 3 O-linked (GalNAc...) threonine glycosylation sites follow: threonine 63, threonine 71, and threonine 77. The segment covering 72-81 (QRERGTKPPL) has biased composition (basic and acidic residues). Residue serine 85 is glycosylated (O-linked (GalNAc...) serine). A glycan (O-linked (GalNAc...) threonine) is linked at threonine 86. Serine 87 is a glycosylation site (O-linked (GalNAc...) serine). The O-linked (GalNAc...) threonine glycan is linked to threonine 89. A glycan (O-linked (GalNAc...) serine) is linked at serine 90. Basic and acidic residues predominate over residues 90-99 (SDHDHREHES). O-linked (GalNAc...) threonine glycosylation is found at threonine 100, threonine 101, threonine 102, threonine 107, and threonine 115. Residues 100-109 (TTTVKVVTSH) show a composition bias toward low complexity. Positions 110 to 132 (SVDKKTSHPNRDNAGDETQTTDK) are enriched in basic and acidic residues. Residues 142-162 (VGIIVGVLLAIGFVGGIFIVV) traverse the membrane as a helical segment. Residues 143–147 (GIIVG) are requires for dimerization and lipidd rafts association. Residues 163-172 (MKKISGRFSP) lie on the Cytoplasmic side of the membrane. Residues 164 to 165 (KK) form a requires for interaction with MSN and EZR region.

The protein belongs to the podoplanin family. In terms of assembly, homodimer. Interacts with CLEC1B; the interaction is independent of CLEC1B glycosylation and activates CLEC1B; the interaction is dependent of sialic acid on O-glycans. Interacts with CD9; this interaction is homophilic and attenuates platelet aggregation and pulmonary metastasis induced by PDPN. Interacts with LGALS8; the interaction is glycosylation-dependent; may participate in connection of the lymphatic endothelium to the surrounding extracellular matrix. Interacts with HSPA9. Interacts (via extracellular domain) with CD44; this interaction is required for PDPN-mediated directional migration and regulation of lamellipodia extension/stabilization during cell spreading and migration. Interacts (via cytoplasmic domain) with MSN and EZR; activates RHOA and promotes epithelial-mesenchymal transition. Interacts with CCL21; relocalized PDPN to the basolateral membrane. Post-translationally, extensively O-glycosylated. Contains sialic acid residues. O-glycosylation is necessary for platelet aggregation activity. Disialylated at Thr-52; sialic acid is critical for platelet-aggregating activity and for CLEC1B interaction. In terms of processing, phosphorylated by PKA; decreases cell migration. The N-terminus is blocked. In terms of tissue distribution, detected at high levels in lung and brain, at lower levels in kidney, stomach, liver, spleen and esophagus, and not detected in skin and small intestine. Expressed in epithelial cells of choroid plexus, ependyma, glomerulus and alveolus, in mesothelial cells and in endothelia of lymphatic vessels. Also expressed in stromal cells of peripheral lymphoid tissue and thymic epithelial cells. Detected in carcinoma cell lines and cultured fibroblasts. Expressed at higher levels in colon carcinomas than in normal colon tissue.

Its subcellular location is the membrane. It localises to the cell projection. The protein resides in the lamellipodium membrane. It is found in the filopodium membrane. The protein localises to the microvillus membrane. Its subcellular location is the ruffle membrane. It localises to the membrane raft. The protein resides in the apical cell membrane. It is found in the basolateral cell membrane. The protein localises to the invadopodium. In terms of biological role, mediates effects on cell migration and adhesion through its different partners. During development plays a role in blood and lymphatic vessels separation by binding CLEC1B, triggering CLEC1B activation in platelets and leading to platelet activation and/or aggregation. Interaction with CD9, on the contrary, attenuates platelet aggregation and pulmonary metastasis induced by PDPN. Mediates effects on cell migration and adhesion through its different partners. Through MSN or EZR interaction promotes epithelial-mesenchymal transition (EMT) leading to ERZ phosphorylation and triggering RHOA activation leading to cell migration increase and invasiveness. Interaction with CD44 promotes directional cell migration in epithelial and tumor cells. In lymph nodes (LNs), controls fibroblastic reticular cells (FRCs) adhesion to the extracellular matrix (ECM) and contraction of the actomyosin by maintaining ERM proteins (EZR; MSN and RDX) and MYL9 activation through association with unknown transmembrane proteins. Engagement of CLEC1B by PDPN promotes FRCs relaxation by blocking lateral membrane interactions leading to reduction of ERM proteins (EZR; MSN and RDX) and MYL9 activation. Through binding with LGALS8 may participate in connection of the lymphatic endothelium to the surrounding extracellular matrix. In keratinocytes, induces changes in cell morphology showing an elongated shape, numerous membrane protrusions, major reorganization of the actin cytoskeleton, increased motility and decreased cell adhesion. Controls invadopodia stability and maturation leading to efficient degradation of the extracellular matrix (ECM) in tumor cells through modulation of RHOC activity in order to activate ROCK1/ROCK2 and LIMK1/LIMK2 and inactivation of CFL1. Required for normal lung cell proliferation and alveolus formation at birth. Does not function as a water channel or as a regulator of aquaporin-type water channels. Does not have any effect on folic acid or amino acid transport. The polypeptide is Podoplanin (Mus musculus (Mouse)).